A 1191-amino-acid polypeptide reads, in one-letter code: Solute carrier family 12 member 2 (1191 aa).

Residues 1–166 form a disordered region; it reads MEPAFPASSA…MSEGSLHSSG (166 aa). At 1-258 the chain is on the cytoplasmic side; the sequence is MEPAFPASSA…ADNKGVVKFG (258 aa). Composition is skewed to low complexity over residues 13-25, 59-69, 80-99, and 131-141; these read QSQS…AGQQ, KGQTAAQPAAA, AAAP…AAAA, and SASSAHGGHQP. Residues 142–155 show a composition bias toward polar residues; sequence PSESMNGYPQNGDT. Phosphothreonine; by OXSR1 and STK39 is present on residues Thr-175, Thr-179, and Thr-184. A phosphothreonine mark is found at Thr-189 and Thr-202. The chain crosses the membrane as a discontinuously helical span at residues 259–288; the sequence is WIKGVLVRCMLNIWGVMLFIRLSWIVGHAG. Leu-269 lines the Na(+) pocket. Residues Asn-270 and Ile-271 each coordinate K(+). Trp-272 serves as a coordination point for Na(+). The chloride site is built by Gly-273, Val-274, and Met-275. The chain crosses the membrane as a helical span at residues 289–308; it reads IGLALLVIGTATVVTTITGL. Residues 309–339 are Cytoplasmic-facing; it reads STSAITTNGFVRGGGAYYLISRSLGPEFGGA. The helical transmembrane segment at 340–367 threads the bilayer; sequence IGLIFAFANAVAVAMYVVGFAETVRDLL. A chloride-binding site is contributed by Phe-344. Tyr-355 provides a ligand contact to K(+). The Extracellular portion of the chain corresponds to 368–377; the sequence is VEHNALMIDE. A helical membrane pass occupies residues 378–401; that stretch reads MSDIRIIGSVTIVVLFGISVAGME. At 402-404 the chain is on the cytoplasmic side; sequence WEA. Residues 405 to 426 form a helical membrane-spanning segment; the sequence is KAQIVLLGILLLAIVNFTVGTF. Residues 427–458 are Extracellular-facing; it reads IPANDKRAKGFFNYRGEIFSENFVPDFRDGED. A discontinuously helical transmembrane segment spans residues 459–476; it reads FFSVFAIFFPAATGILAG. Residues Pro-468, Ala-469, and Thr-471 each contribute to the K(+) site. Pro-468 and Ala-469 together coordinate chloride. Residues Gly-472 and Ile-473 each contribute to the chloride site. At 477–491 the chain is on the cytoplasmic side; sequence ANISGDLADPQLAIP. A helical membrane pass occupies residues 492–513; that stretch reads KGTLLAILITTIVYAGAAVSVG. The Extracellular portion of the chain corresponds to 514–571; sequence SCIVREATGNLTDAIIPGTVTNCTNVACKLGFNFSSCATNKCSYGLMNDFQVMSLVSG. N-linked (GlcNAc...) asparagine glycosylation is found at Asn-523 and Asn-535. A disulfide bond links Cys-536 and Cys-541. Residue Asn-546 is glycosylated (N-linked (GlcNAc...) asparagine). A disulfide bond links Cys-550 and Cys-555. The helical transmembrane segment at 572-596 threads the bilayer; that stretch reads FGPLITAGIFSATLSSALASLVSAP. Na(+) is bound by residues Ala-583, Ser-586, and Ser-587. Residues 597–624 are Cytoplasmic-facing; that stretch reads KIFQALCKDNIYPGLHVFSVGYGKNNEP. Transmembrane regions (helical) follow at residues 625 to 645 and 646 to 664; these read LRGY…AELN and VIAP…LINF. Phe-655 and Tyr-659 together coordinate chloride. Residues 665 to 687 are Cytoplasmic-facing; it reads SVFHASLAKSPGWRPAFRFYNMW. Helical transmembrane passes span 688-705 and 706-718; these read ISLI…VINW and WAAL…VLAL. Over 719–1191 the chain is Cytoplasmic; sequence YIYVTYKKPD…NHQSVLTFYS (473 aa). Positions 734-751 are scissor helix; the sequence is STQALTYLNALQHAIRLT. Positions 929 to 972 are disordered; sequence HSDADSSKPSSKSVSETNSPAVCQDQKDEEDDGKASTQPLLKKE. Over residues 935–948 the composition is skewed to low complexity; it reads SKPSSKSVSETNSP. Thr-1114 bears the Phosphothreonine mark.

It belongs to the SLC12A transporter family. Homodimer. Phosphorylated at Thr-175, Thr-179 and Thr-184 by OXSR1/OSR1 and STK39/SPAK downstream of WNK kinases (WNK1, WNK2, WNK3 or WNK4), promoting its activity. As to expression, strongly expressed in rectal gland, brain, gill and intestine. Also detected at lower levels in heart, kidney, and testis.

It localises to the basolateral cell membrane. The enzyme catalyses K(+)(out) + 2 chloride(out) + Na(+)(out) = K(+)(in) + 2 chloride(in) + Na(+)(in). Activated following phosphorylation by OXSR1/OSR1 and STK39/SPAK. Inhibited by bumetanide. Functionally, cation-chloride cotransporter which mediates the electroneutral transport of chloride, potassium and/or sodium ions across the membrane. Plays a vital role in the regulation of ionic balance and cell volume. This chain is Solute carrier family 12 member 2 (SLC12A2), found in Squalus acanthias (Spiny dogfish).